We begin with the raw amino-acid sequence, 217 residues long: Probable transaldolase (217 aa).

The active-site Schiff-base intermediate with substrate is the Lys-83.

This sequence belongs to the transaldolase family. Type 3B subfamily.

The protein localises to the cytoplasm. It catalyses the reaction D-sedoheptulose 7-phosphate + D-glyceraldehyde 3-phosphate = D-erythrose 4-phosphate + beta-D-fructose 6-phosphate. The protein operates within carbohydrate degradation; pentose phosphate pathway; D-glyceraldehyde 3-phosphate and beta-D-fructose 6-phosphate from D-ribose 5-phosphate and D-xylulose 5-phosphate (non-oxidative stage): step 2/3. In terms of biological role, transaldolase is important for the balance of metabolites in the pentose-phosphate pathway. This is Probable transaldolase from Lactiplantibacillus plantarum (strain ATCC BAA-793 / NCIMB 8826 / WCFS1) (Lactobacillus plantarum).